A 328-amino-acid chain; its full sequence is Tetraacyldisaccharide 4'-kinase (328 aa).

55–62 (TAGGNGKT) serves as a coordination point for ATP.

Belongs to the LpxK family.

It catalyses the reaction a lipid A disaccharide + ATP = a lipid IVA + ADP + H(+). Its pathway is glycolipid biosynthesis; lipid IV(A) biosynthesis; lipid IV(A) from (3R)-3-hydroxytetradecanoyl-[acyl-carrier-protein] and UDP-N-acetyl-alpha-D-glucosamine: step 6/6. Transfers the gamma-phosphate of ATP to the 4'-position of a tetraacyldisaccharide 1-phosphate intermediate (termed DS-1-P) to form tetraacyldisaccharide 1,4'-bis-phosphate (lipid IVA). This chain is Tetraacyldisaccharide 4'-kinase, found in Escherichia coli (strain K12 / MC4100 / BW2952).